Consider the following 340-residue polypeptide: Glycerol-3-phosphate dehydrogenase [NAD(P)+] (340 aa).

Residues Ser-12, Trp-13, Lys-34, and Lys-107 each coordinate NADPH. Residues Lys-107, Gly-138, and Ser-140 each coordinate sn-glycerol 3-phosphate. Ala-142 serves as a coordination point for NADPH. The sn-glycerol 3-phosphate site is built by Lys-193, Asp-246, Ser-256, Arg-257, and Asn-258. Lys-193 (proton acceptor) is an active-site residue. Arg-257 contacts NADPH. Residues Ile-281 and Glu-283 each coordinate NADPH.

It belongs to the NAD-dependent glycerol-3-phosphate dehydrogenase family.

The protein resides in the cytoplasm. The catalysed reaction is sn-glycerol 3-phosphate + NAD(+) = dihydroxyacetone phosphate + NADH + H(+). It carries out the reaction sn-glycerol 3-phosphate + NADP(+) = dihydroxyacetone phosphate + NADPH + H(+). It participates in membrane lipid metabolism; glycerophospholipid metabolism. In terms of biological role, catalyzes the reduction of the glycolytic intermediate dihydroxyacetone phosphate (DHAP) to sn-glycerol 3-phosphate (G3P), the key precursor for phospholipid synthesis. This is Glycerol-3-phosphate dehydrogenase [NAD(P)+] from Enterococcus faecalis (strain ATCC 700802 / V583).